The chain runs to 129 residues: Small ribosomal subunit protein uS8 (129 aa).

The protein belongs to the universal ribosomal protein uS8 family. As to quaternary structure, part of the 30S ribosomal subunit. Contacts proteins S5 and S12.

Its function is as follows. One of the primary rRNA binding proteins, it binds directly to 16S rRNA central domain where it helps coordinate assembly of the platform of the 30S subunit. This is Small ribosomal subunit protein uS8 from Colwellia psychrerythraea (strain 34H / ATCC BAA-681) (Vibrio psychroerythus).